A 471-amino-acid chain; its full sequence is F-box only protein 3 (471 aa).

The region spanning Pro-10–His-56 is the F-box domain. Residues Val-278–Val-408 form the ApaG domain. Over residues Glu-419–Glu-451 the composition is skewed to acidic residues. Residues Glu-419–Arg-455 are disordered.

Part of a SCF (SKP1-cullin-F-box) protein ligase complex SCF(FBXO3) consisting of FBXO3, SKP1, CUL1 and RBX1. Interacts with PML, interaction is direct and takes place either alone or within the SCF complex. In terms of assembly, (Microbial infection) Interacts (via ApaG domain) with Rift valley fever virus NSs helical filament; this interaction forms a filamentous E3 which mediates degradation of TFIIH complex through interaction with GT2H1.

The protein localises to the nucleus. Its pathway is protein modification; protein ubiquitination. In terms of biological role, substrate recognition component of the SCF (SKP1-CUL1-F-box protein)-type E3 ubiquitin ligase complex, SCF(FBXO3), which mediates the ubiquitination and subsequent proteasomal degradation of target proteins. Mediates the ubiquitination of HIPK2 and probably that of EP300, leading to rapid degradation by the proteasome. In the presence of PML, HIPK2 ubiquitination still occurs, but degradation is prevented. PML, HIPK2 and FBXO3 may act synergically to activate p53/TP53-dependent transactivation. The SCF(FBXO3) also acts as a regulator of inflammation by mediating ubiquitination and degradation of FBXL2 in response to lipopolysaccharide (LPS). The SCF(FBXO3) complex specifically recognizes FBXL2 phosphorylated at 'Thr-404' and promotes its ubiquitination. (Microbial infection) Associates with the Rift valley fever virus NSs to form a remodeled E3 ligase that triggers efficient proteasomal degradation of targeted proteins. The filamentous E3 ligase targets the TFIIH complex leading to robust inhibition of antiviral immunity and enhances viral pathogenesis. The protein is F-box only protein 3 of Homo sapiens (Human).